Reading from the N-terminus, the 271-residue chain is Tryptophan synthase alpha chain (271 aa).

Residues Glu-56 and Asp-67 each act as proton acceptor in the active site.

This sequence belongs to the TrpA family. Tetramer of two alpha and two beta chains.

It catalyses the reaction (1S,2R)-1-C-(indol-3-yl)glycerol 3-phosphate + L-serine = D-glyceraldehyde 3-phosphate + L-tryptophan + H2O. The protein operates within amino-acid biosynthesis; L-tryptophan biosynthesis; L-tryptophan from chorismate: step 5/5. In terms of biological role, the alpha subunit is responsible for the aldol cleavage of indoleglycerol phosphate to indole and glyceraldehyde 3-phosphate. This Mycobacterium intracellulare protein is Tryptophan synthase alpha chain.